A 75-amino-acid chain; its full sequence is Small ribosomal subunit protein bS21B (75 aa).

Basic and acidic residues predominate over residues 33 to 52 (RRSYEKPSERRAREKAEAVR). The disordered stretch occupies residues 33–75 (RRSYEKPSERRAREKAEAVRRARKLARKQAQREGLLPGKKRAA).

The protein belongs to the bacterial ribosomal protein bS21 family.

The protein is Small ribosomal subunit protein bS21B of Chelativorans sp. (strain BNC1).